The chain runs to 152 residues: Protein-export protein SecB (152 aa).

Belongs to the SecB family. Homotetramer, a dimer of dimers. One homotetramer interacts with 1 SecA dimer.

It is found in the cytoplasm. In terms of biological role, one of the proteins required for the normal export of preproteins out of the cell cytoplasm. It is a molecular chaperone that binds to a subset of precursor proteins, maintaining them in a translocation-competent state. It also specifically binds to its receptor SecA. This chain is Protein-export protein SecB, found in Rickettsia akari (strain Hartford).